The sequence spans 201 residues: Probable quinol oxidase subunit 3 (201 aa).

A run of 5 helical transmembrane segments spans residues 20–40, 62–82, 91–111, 133–153, and 180–200; these read LGFWVFLTAEFSLFGTLFATL, LVLIMTFALLISSYTCGIAIY, LMLIWMIITVLLGMVFVGFEI, FFILLGTHGAHVSLGIVWIIC, and FLDVVWIFIFTAVYMIGMVFS.

Belongs to the cytochrome c oxidase subunit 3 family.

Its subcellular location is the cell membrane. The enzyme catalyses 2 a quinol + O2 = 2 a quinone + 2 H2O. Functionally, catalyzes quinol oxidation with the concomitant reduction of oxygen to water. In Staphylococcus saprophyticus subsp. saprophyticus (strain ATCC 15305 / DSM 20229 / NCIMB 8711 / NCTC 7292 / S-41), this protein is Probable quinol oxidase subunit 3 (qoxC).